The following is a 64-amino-acid chain: Large ribosomal subunit protein uL29 (64 aa).

Belongs to the universal ribosomal protein uL29 family.

The sequence is that of Large ribosomal subunit protein uL29 from Levilactobacillus brevis (strain ATCC 367 / BCRC 12310 / CIP 105137 / JCM 1170 / LMG 11437 / NCIMB 947 / NCTC 947) (Lactobacillus brevis).